The sequence spans 178 residues: Interleukin-10 (178 aa).

The first 18 residues, 1-18 (MPNPVLLYCLVLLAGMGT), serve as a signal peptide directing secretion. 2 disulfides stabilise this stretch: cysteine 30-cysteine 126 and cysteine 80-cysteine 132. N-linked (GlcNAc...) asparagine glycosylation occurs at asparagine 134.

It belongs to the IL-10 family. As to quaternary structure, homodimer. Interacts with IL10RA and IL10RB.

It is found in the secreted. Functionally, major immune regulatory cytokine that acts on many cells of the immune system where it has profound anti-inflammatory functions, limiting excessive tissue disruption caused by inflammation. Mechanistically, IL10 binds to its heterotetrameric receptor comprising IL10RA and IL10RB leading to JAK1 and STAT2-mediated phosphorylation of STAT3. In turn, STAT3 translocates to the nucleus where it drives expression of anti-inflammatory mediators. Targets antigen-presenting cells (APCs) such as macrophages and monocytes and inhibits their release of pro-inflammatory cytokines including granulocyte-macrophage colony-stimulating factor /GM-CSF, granulocyte colony-stimulating factor/G-CSF, IL-1 alpha, IL-1 beta, IL-6, IL-8 and TNF-alpha. Also interferes with antigen presentation by reducing the expression of MHC-class II and co-stimulatory molecules, thereby inhibiting their ability to induce T cell activation. In addition, controls the inflammatory response of macrophages by reprogramming essential metabolic pathways including mTOR signaling. The chain is Interleukin-10 (IL10) from Marmota monax (Woodchuck).